Consider the following 33-residue polypeptide: Cytochrome b6-f complex subunit 8 (33 aa).

Residues 2–22 (LFTLAWASLAAVFSFSIAMVV) form a helical membrane-spanning segment.

This sequence belongs to the PetN family. The 4 large subunits of the cytochrome b6-f complex are cytochrome b6, subunit IV (17 kDa polypeptide, PetD), cytochrome f and the Rieske protein, while the 4 small subunits are PetG, PetL, PetM and PetN. The complex functions as a dimer.

It is found in the cellular thylakoid membrane. Functionally, component of the cytochrome b6-f complex, which mediates electron transfer between photosystem II (PSII) and photosystem I (PSI), cyclic electron flow around PSI, and state transitions. The sequence is that of Cytochrome b6-f complex subunit 8 from Prochlorococcus marinus (strain MIT 9303).